The chain runs to 564 residues: Agglutinin (564 aa).

Positions 1-24 are cleaved as a signal peptide; that stretch reads MYAVATWLCFGSTSGWSFTLEDNN. 32–34 lines the beta-D-galactose pocket; the sequence is IIN. A glycan (N-linked (GlcNAc...) asparagine) is linked at Asn34. Active-site residues include Tyr104, Tyr147, Glu200, and Arg203. Residues 104–105 and 145–147 each bind AMP; these read YV and GNY. N-linked (GlcNAc...) asparagine glycosylation is present at Asn259. Cys282 and Cys306 are oxidised to a cystine. Residues 291 to 302 constitute a propeptide, linker peptide; sequence SLLIRPVVPNFN. Residues 309–436 enclose the Ricin B-type lectin 1 domain; it reads PEPIVRIVGR…YAVSQGWLPT (128 aa). Beta-D-galactose-binding positions include Ile312, 324–328, Gln337, Lys342, and Asn348; that span reads DVTGE. A 1-alpha repeat occupies 319–361; the sequence is NGLCVDVTGEEFFDGNPIQLWPCKSNTDWNQLWTLRKDSTIRS. Residues Cys322 and Cys341 are joined by a disulfide bond. The 1-beta repeat unit spans residues 362 to 402; sequence NGKCLTISKSSPRQQVVIYNCSTATVGATRWQIWDNRTIIN. Cysteines 365 and 382 form a disulfide. N-linked (GlcNAc...) asparagine glycans are attached at residues Asn397 and Asn437. The stretch at 405 to 437 is one 1-gamma repeat; the sequence is SGLVLAATSGNSGTKLTVQTNIYAVSQGWLPTN. Asn437 contributes to the beta-D-galactose binding site. The Ricin B-type lectin 2 domain occupies 439–563; sequence TQPFVTTIVG…GNLNQIWLPL (125 aa). A 2-alpha repeat occupies 450–485; sequence YGMCLQANSGKVWLEDCTSEKAEQQWALYADGSIRP. 2 disulfides stabilise this stretch: Cys453/Cys466 and Cys492/Cys509. The 2-beta repeat unit spans residues 489–528; that stretch reads RDNCLTTDANIKGTVVKILSCGPASSGQRWMFKNDGTILN. One copy of the 2-gamma repeat lies at 531-558; the sequence is NGLVLDVRRSDPSLKQIIVHPFHGNLNQ.

This sequence in the N-terminal section; belongs to the ribosome-inactivating protein family. Type 2 RIP subfamily.

It carries out the reaction Endohydrolysis of the N-glycosidic bond at one specific adenosine on the 28S rRNA.. The chain is Agglutinin from Ricinus communis (Castor bean).